The sequence spans 351 residues: Foldase protein PrsA 1 (351 aa).

Positions 1–22 (MKNSNKLIASVVTLASVMALAA) are cleaved as a signal peptide. Residue cysteine 23 is the site of N-palmitoyl cysteine attachment. A lipid anchor (S-diacylglycerol cysteine) is attached at cysteine 23. A PpiC domain is found at 145–240 (TPTMAVEMIT…KKFYIVKVTK (96 aa)). 2 stretches are compositionally biased toward low complexity: residues 303–317 (KTKA…SESS) and 326–351 (ESEQ…PAAQ). The tract at residues 303–351 (KTKAASESSTTSESSKAAEENPSESEQTQTSSAEEPTETEAQTQEPAAQ) is disordered.

Belongs to the PrsA family.

It localises to the cell membrane. The catalysed reaction is [protein]-peptidylproline (omega=180) = [protein]-peptidylproline (omega=0). Its function is as follows. Plays a major role in protein secretion by helping the post-translocational extracellular folding of several secreted proteins. In Streptococcus pyogenes serotype M18 (strain MGAS8232), this protein is Foldase protein PrsA 1 (prsA1).